Here is a 397-residue protein sequence, read N- to C-terminus: Succinate--CoA ligase [ADP-forming] subunit beta (397 aa).

Positions 9–254 (KALLKSFGAP…TTEEDEKEIE (246 aa)) constitute an ATP-grasp domain. ATP-binding positions include lysine 46, 53–55 (GRG), glutamate 109, alanine 112, and glutamate 117. Mg(2+) is bound by residues asparagine 209 and aspartate 223. Residues asparagine 274 and 331-333 (GIM) each bind substrate.

Belongs to the succinate/malate CoA ligase beta subunit family. In terms of assembly, heterotetramer of two alpha and two beta subunits. Requires Mg(2+) as cofactor.

It catalyses the reaction succinate + ATP + CoA = succinyl-CoA + ADP + phosphate. The catalysed reaction is GTP + succinate + CoA = succinyl-CoA + GDP + phosphate. It functions in the pathway carbohydrate metabolism; tricarboxylic acid cycle; succinate from succinyl-CoA (ligase route): step 1/1. Functionally, succinyl-CoA synthetase functions in the citric acid cycle (TCA), coupling the hydrolysis of succinyl-CoA to the synthesis of either ATP or GTP and thus represents the only step of substrate-level phosphorylation in the TCA. The beta subunit provides nucleotide specificity of the enzyme and binds the substrate succinate, while the binding sites for coenzyme A and phosphate are found in the alpha subunit. This chain is Succinate--CoA ligase [ADP-forming] subunit beta, found in Mesorhizobium japonicum (strain LMG 29417 / CECT 9101 / MAFF 303099) (Mesorhizobium loti (strain MAFF 303099)).